The chain runs to 480 residues: EGF-like repeat and discoidin I-like domain-containing protein 3 (480 aa).

Residues 1-23 form the signal peptide; it reads MKRSVAVWLLVGLSLGVPQFGKG. One can recognise an EGF-like 1 domain in the interval 24-60; that stretch reads DICDPNPCENGGICLPGLADGSFSCECPDGFTDPNCS. Intrachain disulfides connect cysteine 26–cysteine 37, cysteine 31–cysteine 48, and cysteine 50–cysteine 59. O-linked (GalNAc...) threonine glycosylation occurs at threonine 73. 2 consecutive EGF-like domains span residues 74-117 and 119-155; these read SAGP…IHCQ and NINECEVEPCKNGGICTDLVANYSCECPGEFMGRNCQ. Intrachain disulfides connect cysteine 78–cysteine 89, cysteine 83–cysteine 105, and cysteine 107–cysteine 116. An O-linked (Fuc...) threonine glycan is attached at threonine 88. Residues 96 to 98 carry the Cell attachment site motif; it reads RGD. Residues asparagine 119, isoleucine 120, and glutamate 122 each coordinate Ca(2+). 6 disulfides stabilise this stretch: cysteine 123–cysteine 134, cysteine 128–cysteine 143, cysteine 145–cysteine 154, cysteine 158–cysteine 314, cysteine 301–cysteine 305, and cysteine 319–cysteine 476. Ca(2+) contacts are provided by aspartate 136 and leucine 137. N-linked (GlcNAc...) asparagine glycosylation occurs at asparagine 140. 2 consecutive F5/8 type C domains span residues 158 to 314 and 319 to 476; these read CSGP…LLGC and CSEP…LLGC.

The protein resides in the secreted. Its function is as follows. Promotes adhesion of endothelial cells through interaction with the alpha-v/beta-3 integrin receptor. Inhibits formation of vascular-like structures. May be involved in regulation of vascular morphogenesis of remodeling in embryonic development. This Homo sapiens (Human) protein is EGF-like repeat and discoidin I-like domain-containing protein 3 (EDIL3).